The sequence spans 638 residues: Plasma kallikrein (638 aa).

Positions 1-19 (MILFKQATYFISLFATVSC) are cleaved as a signal peptide. Apple domains are found at residues 21–104 (CLTQ…LKQC), 111–194 (CHRD…LKPC), 201–284 (CHMN…LLTC), and 292–375 (CHSK…LRLC). Disulfide bonds link Cys-21/Cys-104, Cys-47/Cys-77, Cys-51/Cys-57, Cys-111/Cys-194, Cys-137/Cys-166, Cys-141/Cys-147, Cys-201/Cys-284, Cys-227/Cys-256, Cys-231/Cys-237, Cys-292/Cys-375, Cys-318/Cys-347, Cys-322/Cys-328, Cys-340/Cys-345, Cys-383/Cys-503, Cys-419/Cys-435, Cys-517/Cys-584, Cys-548/Cys-563, and Cys-574/Cys-602. Asn-127 carries an N-linked (GlcNAc...) asparagine glycan. Asn-308 carries an N-linked (GlcNAc...) asparagine glycan. The Peptidase S1 domain occupies 391-626 (IVGGTNSSWG…YMDWILEKTQ (236 aa)). Asn-396 is a glycosylation site (N-linked (GlcNAc...) asparagine). Catalysis depends on His-434, which acts as the Charge relay system. N-linked (GlcNAc...) asparagine glycosylation is present at Asn-453. Catalysis depends on Asp-483, which acts as the Charge relay system. A glycan (N-linked (GlcNAc...) asparagine) is linked at Asn-494. Ser-578 acts as the Charge relay system in catalysis.

It belongs to the peptidase S1 family. Plasma kallikrein subfamily. As to quaternary structure, forms a heterodimer with SERPINA5. The zymogen is activated by factor XIIa, which cleaves the molecule into a light chain, which contains the active site, and a heavy chain, which associates with HMW kininogen. These chains are linked by one or more disulfide bonds. Interacts with iripin-3, a serine protease inhibitor from Ixodes ricinus saliva. Interacts with iripin-1, a serine protease inhibitor from Ixodes ricinus saliva. Found in plasma (at protein level).

It is found in the secreted. The catalysed reaction is Cleaves selectively Arg-|-Xaa and Lys-|-Xaa bonds, including Lys-|-Arg and Arg-|-Ser bonds in (human) kininogen to release bradykinin.. With respect to regulation, inhibited by SERPINA5. Participates in the surface-dependent activation of blood coagulation. Activates, in a reciprocal reaction, coagulation factor XII/F12 after binding to negatively charged surfaces. Releases bradykinin from HMW kininogen and may also play a role in the renin-angiotensin system by converting prorenin into renin. The sequence is that of Plasma kallikrein (KLKB1) from Homo sapiens (Human).